The primary structure comprises 166 residues: Large ribosomal subunit protein uL10 (166 aa).

The protein belongs to the universal ribosomal protein uL10 family. As to quaternary structure, part of the ribosomal stalk of the 50S ribosomal subunit. The N-terminus interacts with L11 and the large rRNA to form the base of the stalk. The C-terminus forms an elongated spine to which L12 dimers bind in a sequential fashion forming a multimeric L10(L12)X complex.

In terms of biological role, forms part of the ribosomal stalk, playing a central role in the interaction of the ribosome with GTP-bound translation factors. This is Large ribosomal subunit protein uL10 from Pseudomonas syringae pv. tomato (strain ATCC BAA-871 / DC3000).